The following is a 415-amino-acid chain: MAEFIRSDILGTTFETTSRYANLQPVGLGTAGVVCSAYDLISEQVVAIKKMMKPFHSTSVAKRTYREVKLLRHLRHDNLINMSDIFISPLEDVYLVTELLGTDLHRLLNGKPLESKFAQYFTYQILRGLKYIHSAGVIHRDLKPGNLLINENCDLKICDFGLARVQEPQMTGYVSTRYYRAPEIMLTWQRYGSKVDLWSVGCILAEMLLGRPLFPGTDHINQFWLITDLLGNPPDEVIDRITTNNTRRVVKSMAKRNPRPLKEILPAAEDAALNLLDNLLVFDPDRRISAEQGLMHPWMAPYHDPTDEPVATEQFDWSFNDADLPLDTWKIMIYSEVLDFFQLTTNAEPSGEQSQNQSQSQSQAFTSSQDLQLASMLNLGEGELLPDFAATIDPNKFGSVDYLMDGQSLDPNSFS.

The 280-residue stretch at Y20–M299 folds into the Protein kinase domain. Residues V26–V34 and K49 each bind ATP. The active-site Proton acceptor is D141. The residue at position 171 (T171) is a Phosphothreonine. Residues T171–Y173 carry the TXY motif. A Phosphotyrosine modification is found at Y173.

This sequence belongs to the protein kinase superfamily. Ser/Thr protein kinase family. MAP kinase subfamily. HOG1 sub-subfamily. It depends on Mg(2+) as a cofactor. Dually phosphorylated on Thr-171 and Tyr-173, which activates the enzyme.

The catalysed reaction is L-seryl-[protein] + ATP = O-phospho-L-seryl-[protein] + ADP + H(+). The enzyme catalyses L-threonyl-[protein] + ATP = O-phospho-L-threonyl-[protein] + ADP + H(+). Its activity is regulated as follows. Activated by tyrosine and threonine phosphorylation. Functionally, mitogen-activated protein kinase required for growth on media where sorbitol or mannitol is the sole carbon source. In Emericella nidulans (strain FGSC A4 / ATCC 38163 / CBS 112.46 / NRRL 194 / M139) (Aspergillus nidulans), this protein is Mitogen-activated protein kinase mpkC (mpkC).